The sequence spans 424 residues: Nuclear hormone receptor family member nhr-55 (424 aa).

Residues 1–19 are compositionally biased toward low complexity; that stretch reads MNSPSSSSSFCSSSSSPSS. The disordered stretch occupies residues 1-20; the sequence is MNSPSSSSSFCSSSSSPSSL. A DNA-binding region (nuclear receptor) is located at residues 25–100; the sequence is PDTCQVCGQK…VGMTIENFQF (76 aa). NR C4-type zinc fingers lie at residues 28–55 and 64–88; these read CQVCGQKSHGKHFGAVTCRACAAFFRRC and CRRNMNCEFLKNGWFNCKPCRLKKC. An NR LBD domain is found at 169–424; sequence EVPLHTPNAL…FSHPEVFIDL (256 aa).

It belongs to the nuclear hormone receptor family.

The protein localises to the nucleus. Functionally, orphan nuclear receptor. The chain is Nuclear hormone receptor family member nhr-55 (nhr-55) from Caenorhabditis elegans.